The following is a 139-amino-acid chain: Metallothiol transferase FosB (139 aa).

The 116-residue stretch at 4 to 119 (GINHITYSVS…DGHKLELHTG (116 aa)) folds into the VOC domain. The Mg(2+) site is built by His-7, His-66, and Glu-115. Glu-115 acts as the Proton donor/acceptor in catalysis.

It belongs to the fosfomycin resistance protein family. FosB subfamily. In terms of assembly, homodimer. Requires Mg(2+) as cofactor.

It localises to the cytoplasm. Its function is as follows. Metallothiol transferase which confers resistance to fosfomycin by catalyzing the addition of a thiol cofactor to fosfomycin. L-cysteine is probably the physiological thiol donor. The protein is Metallothiol transferase FosB of Staphylococcus haemolyticus.